The following is a 122-amino-acid chain: Small ribosomal subunit protein uS13 (122 aa).

Residues 93 to 122 (RLSLPVRGQRTKTNSRTRKGKRKTVAGKKK) form a disordered region. Residues 101–122 (QRTKTNSRTRKGKRKTVAGKKK) are compositionally biased toward basic residues.

Belongs to the universal ribosomal protein uS13 family. In terms of assembly, part of the 30S ribosomal subunit. Forms a loose heterodimer with protein S19. Forms two bridges to the 50S subunit in the 70S ribosome.

Functionally, located at the top of the head of the 30S subunit, it contacts several helices of the 16S rRNA. In the 70S ribosome it contacts the 23S rRNA (bridge B1a) and protein L5 of the 50S subunit (bridge B1b), connecting the 2 subunits; these bridges are implicated in subunit movement. Contacts the tRNAs in the A and P-sites. The chain is Small ribosomal subunit protein uS13 from Chlamydia abortus (strain DSM 27085 / S26/3) (Chlamydophila abortus).